A 909-amino-acid polypeptide reads, in one-letter code: GTPase activating protein homolog 4 (909 aa).

Residues 1 to 257 (MASLIGSAKL…PTPDFQFESC (257 aa)) form the F-BAR domain. The Rho-GAP domain occupies 322–513 (IPIEEIMFKQ…LIIEGYLKLS (192 aa)). The segment at 529-909 (IPSFSNNNNN…QRVPPPPSQS (381 aa)) is disordered. 2 stretches are compositionally biased toward low complexity: residues 533-562 (SNNNNNSTTTTTTTTTTTVPSSTSTNITTN) and 571-602 (SSTTPLPSLTTFSQSQSSSPPNQPSPSITPQQ). The span at 609 to 625 (SYQPPQPPPTMAPPPLF) shows a compositional bias: pro residues. The span at 651 to 674 (QYTQSSSNLPPIQLGVTNSPSKPQ) shows a compositional bias: polar residues. Residues 672 to 809 (KPQLSDKQKE…QQLQQQSNGS (138 aa)) adopt a coiled-coil conformation. Positions 675-716 (LSDKQKEKEKEKEKEKEKEKEREKEKEKEKEKEKEKEKEKEK) are enriched in basic and acidic residues. Residues 723-741 (SSSTSPNSSSLSISNFLSS) show a composition bias toward low complexity. The span at 742–765 (NKDKDKEKDKEKEKEKEKEKDKEI) shows a compositional bias: basic and acidic residues. Residues 767-785 (ATNSTPEKPVSNRMSLIFS) show a composition bias toward polar residues. Low complexity-rich tracts occupy residues 786–828 (QQLQ…MSPS) and 843–892 (SGTS…ELKS).

The protein localises to the cytoplasm. Its subcellular location is the contractile vacuole. Functionally, rho GTPase-activating protein involved in the signal transduction pathway. This is GTPase activating protein homolog 4 (mgp4) from Dictyostelium discoideum (Social amoeba).